Consider the following 671-residue polypeptide: DNA ligase (671 aa).

NAD(+)-binding positions include 32 to 36 (DAEYD), 81 to 82 (SL), and E113. Residue K115 is the N6-AMP-lysine intermediate of the active site. The NAD(+) site is built by R136, E173, K290, and K314. Zn(2+) contacts are provided by C408, C411, C426, and C432. Residues 593–671 (EIDSPFAGKT…EAEMLRLLGS (79 aa)) enclose the BRCT domain.

This sequence belongs to the NAD-dependent DNA ligase family. LigA subfamily. The cofactor is Mg(2+). Requires Mn(2+) as cofactor.

It catalyses the reaction NAD(+) + (deoxyribonucleotide)n-3'-hydroxyl + 5'-phospho-(deoxyribonucleotide)m = (deoxyribonucleotide)n+m + AMP + beta-nicotinamide D-nucleotide.. DNA ligase that catalyzes the formation of phosphodiester linkages between 5'-phosphoryl and 3'-hydroxyl groups in double-stranded DNA using NAD as a coenzyme and as the energy source for the reaction. It is essential for DNA replication and repair of damaged DNA. This Escherichia coli (strain SE11) protein is DNA ligase.